The sequence spans 109 residues: Latartoxin-2a (109 aa).

Residues 1 to 19 (MKVLVIIALCLVAFQSALS) form the signal peptide. A propeptide spans 20 to 37 (KKIENFESYIEDLKSEAR) (removed in mature form). A Processing quadruplet motif motif is present at residues 34 to 37 (SEAR). Disulfide bonds link cysteine 39–cysteine 56, cysteine 46–cysteine 67, cysteine 55–cysteine 81, cysteine 69–cysteine 79, and cysteine 72–cysteine 93. Valine 108 carries the valine amide modification.

Belongs to the neurotoxin 19 (CSTX) family. 11 (latartoxin) subfamily. Contains 5 disulfide bonds. In terms of processing, cleavage of the propeptide depends on the processing quadruplet motif (XXXR, with at least one of X being E). Expressed by the venom gland.

It localises to the secreted. Insect toxin. Causes paralysis in larvae of C.vicina by depolarizing membranes at the neuromuscular junction. The polypeptide is Latartoxin-2a (Lachesana tarabaevi (Spider)).